The primary structure comprises 112 residues: Putative pterin-4-alpha-carbinolamine dehydratase (112 aa).

The protein belongs to the pterin-4-alpha-carbinolamine dehydratase family.

It catalyses the reaction (4aS,6R)-4a-hydroxy-L-erythro-5,6,7,8-tetrahydrobiopterin = (6R)-L-erythro-6,7-dihydrobiopterin + H2O. The protein is Putative pterin-4-alpha-carbinolamine dehydratase of Vibrio campbellii (strain ATCC BAA-1116).